A 141-amino-acid polypeptide reads, in one-letter code: Large ribosomal subunit protein uL11 (141 aa).

The protein belongs to the universal ribosomal protein uL11 family. Part of the ribosomal stalk of the 50S ribosomal subunit. Interacts with L10 and the large rRNA to form the base of the stalk. L10 forms an elongated spine to which L12 dimers bind in a sequential fashion forming a multimeric L10(L12)X complex. One or more lysine residues are methylated.

Forms part of the ribosomal stalk which helps the ribosome interact with GTP-bound translation factors. The polypeptide is Large ribosomal subunit protein uL11 (Acetivibrio thermocellus (strain ATCC 27405 / DSM 1237 / JCM 9322 / NBRC 103400 / NCIMB 10682 / NRRL B-4536 / VPI 7372) (Clostridium thermocellum)).